A 475-amino-acid chain; its full sequence is Deoxyguanosinetriphosphate triphosphohydrolase-like protein (475 aa).

One can recognise an HD domain in the interval 118–272 (RLTHTLEVAQ…MDLSDDIAYS (155 aa)).

The protein belongs to the dGTPase family. Type 2 subfamily.

The chain is Deoxyguanosinetriphosphate triphosphohydrolase-like protein (dgt) from Bifidobacterium longum (strain NCC 2705).